Reading from the N-terminus, the 264-residue chain is Ribosomal protein L11 methyltransferase (264 aa).

S-adenosyl-L-methionine is bound by residues T116, G137, D159, and N200.

It belongs to the methyltransferase superfamily. PrmA family.

Its subcellular location is the cytoplasm. The enzyme catalyses L-lysyl-[protein] + 3 S-adenosyl-L-methionine = N(6),N(6),N(6)-trimethyl-L-lysyl-[protein] + 3 S-adenosyl-L-homocysteine + 3 H(+). Its function is as follows. Methylates ribosomal protein L11. The protein is Ribosomal protein L11 methyltransferase of Thermotoga neapolitana (strain ATCC 49049 / DSM 4359 / NBRC 107923 / NS-E).